Reading from the N-terminus, the 284-residue chain is Asialoglycoprotein receptor 1 (284 aa).

Positions 1–18 (MTKDYQDFQHLDNDNDHH) are enriched in basic and acidic residues. Residues 1–25 (MTKDYQDFQHLDNDNDHHQLRRGPP) are disordered. Residues 1–39 (MTKDYQDFQHLDNDNDHHQLRRGPPPTPRLLQRLCSGSR) lie on the Cytoplasmic side of the membrane. The short motif at 5–8 (YQDF) is the Endocytosis signal element. Cys-35 carries the S-palmitoyl cysteine lipid modification. The chain crosses the membrane as a helical; Signal-anchor for type II membrane protein span at residues 40-60 (LLLLSSSLSILLLVVVCVITS). Residues 59–117 (TSQNSQLREDLLALRQNFSNLTVSTEDQVKALSTQGSSVGRKMKLVESKLEKQQKDLTE) are a coiled coil. Residues 61–284 (QNSQLREDLL…VCETKLDKAN (224 aa)) lie on the Extracellular side of the membrane. N-linked (GlcNAc...) asparagine glycosylation is found at Asn-75, Asn-78, and Asn-146. Disulfide bonds link Cys-153–Cys-164, Cys-181–Cys-276, and Cys-254–Cys-268. Residues 160 to 277 (YEGSCYWFSS…CRRPYRWVCE (118 aa)) form the C-type lectin domain. 10 residues coordinate Ca(2+): Val-190, Glu-196, Asp-215, Gln-239, Asp-241, Glu-252, Asp-253, Asn-264, Asp-265, and Glu-277.

Interacts with LASS2. Post-translationally, phosphorylated on a cytoplasmic Ser residue. As to expression, expressed exclusively in hepatic parenchymal cells.

It localises to the membrane. Mediates the endocytosis of plasma glycoproteins to which the terminal sialic acid residue on their complex carbohydrate moieties has been removed. The receptor recognizes terminal galactose and N-acetylgalactosamine units. After ligand binding to the receptor, the resulting complex is internalized and transported to a sorting organelle, where receptor and ligand are disassociated. The receptor then returns to the cell membrane surface. This is Asialoglycoprotein receptor 1 (Asgr1) from Mus musculus (Mouse).